Reading from the N-terminus, the 185-residue chain is Transcription factor E (185 aa).

Residues 5–88 (KNKELLEIAQ…YWRLETKKLP (84 aa)) form the HTH TFE/IIEalpha-type domain.

It belongs to the TFE family. In terms of assembly, monomer. Interaction with RNA polymerase subunits RpoF and RpoE is necessary for Tfe stimulatory transcription activity. Able to interact with Tbp and RNA polymerase in the absence of DNA promoter. Interacts both with the preinitiation and elongation complexes.

In terms of biological role, transcription factor that plays a role in the activation of archaeal genes transcribed by RNA polymerase. Facilitates transcription initiation by enhancing TATA-box recognition by TATA-box-binding protein (Tbp), and transcription factor B (Tfb) and RNA polymerase recruitment. Not absolutely required for transcription in vitro, but particularly important in cases where Tbp or Tfb function is not optimal. It dynamically alters the nucleic acid-binding properties of RNA polymerases by stabilizing the initiation complex and destabilizing elongation complexes. Seems to translocate with the RNA polymerase following initiation and acts by binding to the non template strand of the transcription bubble in elongation complexes. This Thermococcus kodakarensis (strain ATCC BAA-918 / JCM 12380 / KOD1) (Pyrococcus kodakaraensis (strain KOD1)) protein is Transcription factor E.